Consider the following 642-residue polypeptide: Zinc finger protein 14 (642 aa).

A KRAB domain is found at 4 to 76 (VSFEDVAVNF…MVERLCESRR (73 aa)). A C2H2-type 1 zinc finger spans residues 103 to 125 (HECSFCGRDFIHHSSLNRHMRSH). Residues 141–163 (CKCKAVGKTFSYHHCFRKHERTH) form a C2H2-type 2; degenerate zinc finger. The C2H2-type 3 zinc-finger motif lies at 169–191 (YECKQCGKAFIYYQPFQRHERTH). Residues 197-217 (YECKQCGKTFIYYQSFQKHAH) form a C2H2-type 4; atypical zinc finger. 15 consecutive C2H2-type zinc fingers follow at residues 223–245 (YECK…KRTH), 251–273 (YECK…ERTH), 279–301 (YKCK…KRTH), 307–329 (YECK…VIIH), 335–357 (YKCK…ERTH), 363–385 (YECK…ERTH), 391–413 (YECK…ETTH), 419–441 (YECK…ERTH), 447–469 (YECK…ERSH), 475–497 (YECK…ERTH), 503–525 (YECK…EKIH), 531–553 (FECK…ERTH), 559–581 (YQCK…ERTH), 587–609 (YRCK…ERSH), and 615–637 (YECK…ERTH).

This sequence belongs to the krueppel C2H2-type zinc-finger protein family.

Its subcellular location is the nucleus. May be involved in transcriptional regulation. The sequence is that of Zinc finger protein 14 (ZNF14) from Homo sapiens (Human).